Consider the following 254-residue polypeptide: tRNA (guanine-N(7)-)-methyltransferase (254 aa).

The disordered stretch occupies residues 1 to 34; the sequence is MNTNTPAHPPEGAPLSEATQAALASAEHAPDSPG. S-adenosyl-L-methionine-binding residues include E87, E112, D139, and D162. Residue D162 is part of the active site. Residues K166, D198, and 233 to 236 contribute to the substrate site; that span reads TKFE.

Belongs to the class I-like SAM-binding methyltransferase superfamily. TrmB family.

The enzyme catalyses guanosine(46) in tRNA + S-adenosyl-L-methionine = N(7)-methylguanosine(46) in tRNA + S-adenosyl-L-homocysteine. Its pathway is tRNA modification; N(7)-methylguanine-tRNA biosynthesis. Catalyzes the formation of N(7)-methylguanine at position 46 (m7G46) in tRNA. This Bordetella bronchiseptica (strain ATCC BAA-588 / NCTC 13252 / RB50) (Alcaligenes bronchisepticus) protein is tRNA (guanine-N(7)-)-methyltransferase.